Here is a 503-residue protein sequence, read N- to C-terminus: Aspartyl/glutamyl-tRNA(Asn/Gln) amidotransferase subunit B (503 aa).

The protein belongs to the GatB/GatE family. GatB subfamily. In terms of assembly, heterotrimer of A, B and C subunits.

It carries out the reaction L-glutamyl-tRNA(Gln) + L-glutamine + ATP + H2O = L-glutaminyl-tRNA(Gln) + L-glutamate + ADP + phosphate + H(+). The catalysed reaction is L-aspartyl-tRNA(Asn) + L-glutamine + ATP + H2O = L-asparaginyl-tRNA(Asn) + L-glutamate + ADP + phosphate + 2 H(+). Functionally, allows the formation of correctly charged Asn-tRNA(Asn) or Gln-tRNA(Gln) through the transamidation of misacylated Asp-tRNA(Asn) or Glu-tRNA(Gln) in organisms which lack either or both of asparaginyl-tRNA or glutaminyl-tRNA synthetases. The reaction takes place in the presence of glutamine and ATP through an activated phospho-Asp-tRNA(Asn) or phospho-Glu-tRNA(Gln). In Cereibacter sphaeroides (strain ATCC 17023 / DSM 158 / JCM 6121 / CCUG 31486 / LMG 2827 / NBRC 12203 / NCIMB 8253 / ATH 2.4.1.) (Rhodobacter sphaeroides), this protein is Aspartyl/glutamyl-tRNA(Asn/Gln) amidotransferase subunit B.